Consider the following 352-residue polypeptide: MRVLAAMSGGVDSAVAAARAVDAGHDVTGVHLALSRSPESDRTGARGCCTIEDARDARRAADILGIPFYVWDLADRFETDVIEEFVESYAAGRTPNPCVRCNERIKFAAVLDKALALGFEAVVTGHHARLDPDGTLRRSVDPDKDQSYVLGTLRPEQLAAARFPLGDSTKAQVRVEAAERRLAVADKPDSHDICFISHGDTGGWLRERLGPRPGPVIDATTGQTLGHHDGAYAFTVGQRRGLKLGRPAADGRPRYVLDISPVTSTVTVGPAEALDVRRLVADRAVWPHEGAVSCLAQVRAHGGVVPAVAQARDEELVVTLTTPVRGTAAGQAVVLYDGDRVLGGGHIRTTGG.

Residues 6–13 (AMSGGVDS) and Leu32 each bind ATP. Catalysis depends on Cys101, which acts as the Nucleophile. A disulfide bond links Cys101 and Cys194. Gly125 is an ATP binding site. The segment at 144–146 (KDQ) is interaction with tRNA. Catalysis depends on Cys194, which acts as the Cysteine persulfide intermediate.

The protein belongs to the MnmA/TRMU family.

It is found in the cytoplasm. It carries out the reaction S-sulfanyl-L-cysteinyl-[protein] + uridine(34) in tRNA + AH2 + ATP = 2-thiouridine(34) in tRNA + L-cysteinyl-[protein] + A + AMP + diphosphate + H(+). In terms of biological role, catalyzes the 2-thiolation of uridine at the wobble position (U34) of tRNA, leading to the formation of s(2)U34. The protein is tRNA-specific 2-thiouridylase MnmA of Frankia casuarinae (strain DSM 45818 / CECT 9043 / HFP020203 / CcI3).